The chain runs to 1460 residues: Cilia- and flagella-associated protein 43 (1460 aa).

WD repeat units lie at residues 46 to 87, 91 to 132, 184 to 221, 303 to 342, 428 to 468, 529 to 569, 589 to 628, 911 to 951, and 1129 to 1170; these read EGRY…HLQC, VATV…RLVK, SKGHYFHSCVWGTEGLYCGAGRGQVVLLDELRTDMKNY, RRRSASDTVKLLVLGGLVVIVCLDGSLVTYDQDTNTAGHT, IFAC…DSAS, MRDH…MKLP, FGRGGITCLSVWNAAGGFVCGGNDSVVHLVPVGKSPIHYS, EIDP…VTEV, and NRRF…CRAV. Coiled-coil stretches lie at residues 1170 to 1214 and 1399 to 1446; these read VVEA…AEEA and LGEH…LREA.

It belongs to the CFAP43 family.

It is found in the cell projection. The protein localises to the cilium. Its subcellular location is the flagellum. It localises to the cytoplasm. The protein resides in the cytoskeleton. It is found in the flagellum axoneme. Functionally, flagellar protein involved in flagellum axoneme organization and function. The sequence is that of Cilia- and flagella-associated protein 43 from Trypanosoma brucei brucei (strain 927/4 GUTat10.1).